A 121-amino-acid chain; its full sequence is Small ribosomal subunit protein uS13 (121 aa).

The disordered stretch occupies residues 92–121 (RKGLPVRGQSSKTNARTVKGPRKTVANKKK). Residues 110–121 (KGPRKTVANKKK) show a composition bias toward basic residues.

The protein belongs to the universal ribosomal protein uS13 family. As to quaternary structure, part of the 30S ribosomal subunit. Forms a loose heterodimer with protein S19. Forms two bridges to the 50S subunit in the 70S ribosome.

In terms of biological role, located at the top of the head of the 30S subunit, it contacts several helices of the 16S rRNA. In the 70S ribosome it contacts the 23S rRNA (bridge B1a) and protein L5 of the 50S subunit (bridge B1b), connecting the 2 subunits; these bridges are implicated in subunit movement. Contacts the tRNAs in the A and P-sites. The chain is Small ribosomal subunit protein uS13 from Mycoplasma mycoides subsp. mycoides SC (strain CCUG 32753 / NCTC 10114 / PG1).